A 309-amino-acid chain; its full sequence is Methionyl-tRNA formyltransferase (309 aa).

Residue 109 to 112 (SLLP) participates in (6S)-5,6,7,8-tetrahydrofolate binding.

Belongs to the Fmt family.

It carries out the reaction L-methionyl-tRNA(fMet) + (6R)-10-formyltetrahydrofolate = N-formyl-L-methionyl-tRNA(fMet) + (6S)-5,6,7,8-tetrahydrofolate + H(+). Its function is as follows. Attaches a formyl group to the free amino group of methionyl-tRNA(fMet). The formyl group appears to play a dual role in the initiator identity of N-formylmethionyl-tRNA by promoting its recognition by IF2 and preventing the misappropriation of this tRNA by the elongation apparatus. In Clostridium perfringens (strain SM101 / Type A), this protein is Methionyl-tRNA formyltransferase.